An 89-amino-acid chain; its full sequence is Large ribosomal subunit protein eL34 (89 aa).

Positions 1–22 (MPAPRYKSGSSKKVYRKAPGNS) are disordered.

This sequence belongs to the eukaryotic ribosomal protein eL34 family.

This Methanococcus maripaludis (strain C5 / ATCC BAA-1333) protein is Large ribosomal subunit protein eL34.